The primary structure comprises 62 residues: Large ribosomal subunit protein uL30 (62 aa).

It belongs to the universal ribosomal protein uL30 family. Part of the 50S ribosomal subunit.

This Shewanella frigidimarina (strain NCIMB 400) protein is Large ribosomal subunit protein uL30.